An 89-amino-acid chain; its full sequence is UPF0335 protein CCNA_03428 (89 aa).

It belongs to the UPF0335 family.

The chain is UPF0335 protein CCNA_03428 from Caulobacter vibrioides (strain NA1000 / CB15N) (Caulobacter crescentus).